The primary structure comprises 151 residues: Deoxyuridine 5'-triphosphate nucleotidohydrolase (151 aa).

Residues 70–72, Asn83, 87–89, and Met97 contribute to the substrate site; these read RSG and LID.

It belongs to the dUTPase family. The cofactor is Mg(2+).

It catalyses the reaction dUTP + H2O = dUMP + diphosphate + H(+). It participates in pyrimidine metabolism; dUMP biosynthesis; dUMP from dCTP (dUTP route): step 2/2. In terms of biological role, this enzyme is involved in nucleotide metabolism: it produces dUMP, the immediate precursor of thymidine nucleotides and it decreases the intracellular concentration of dUTP so that uracil cannot be incorporated into DNA. This is Deoxyuridine 5'-triphosphate nucleotidohydrolase from Mannheimia succiniciproducens (strain KCTC 0769BP / MBEL55E).